Consider the following 134-residue polypeptide: Small ribosomal subunit protein uS8c (134 aa).

In terms of assembly, component of the chloroplast small ribosomal subunit (SSU). Mature 70S chloroplast ribosomes of higher plants consist of a small (30S) and a large (50S) subunit. The 30S small subunit contains 1 molecule of ribosomal RNA (16S rRNA) and 24 different proteins. The 50S large subunit contains 3 rRNA molecules (23S, 5S and 4.5S rRNA) and 33 different proteins.

Its subcellular location is the plastid. The protein localises to the chloroplast. In terms of biological role, component of the chloroplast ribosome (chloro-ribosome), a dedicated translation machinery responsible for the synthesis of chloroplast genome-encoded proteins, including proteins of the transcription and translation machinery and components of the photosynthetic apparatus. The polypeptide is Small ribosomal subunit protein uS8c (rps8) (Spinacia oleracea (Spinach)).